A 241-amino-acid polypeptide reads, in one-letter code: Core protein D3 homolog (241 aa).

It belongs to the chordopoxvirinae D3 family.

Its subcellular location is the virion. Its function is as follows. Late protein which is part of a large complex required for early virion morphogenesis. This complex participates in the formation of virosomes and the incorporation of virosomal contents into nascent immature virions. The chain is Core protein D3 homolog from Oryctolagus cuniculus (Rabbit).